A 421-amino-acid chain; its full sequence is 4-hydroxy-3-methylbut-2-en-1-yl diphosphate synthase (flavodoxin) (421 aa).

Residues Cys300, Cys303, Cys346, and Glu353 each contribute to the [4Fe-4S] cluster site.

This sequence belongs to the IspG family. [4Fe-4S] cluster serves as cofactor.

It carries out the reaction (2E)-4-hydroxy-3-methylbut-2-enyl diphosphate + oxidized [flavodoxin] + H2O + 2 H(+) = 2-C-methyl-D-erythritol 2,4-cyclic diphosphate + reduced [flavodoxin]. It participates in isoprenoid biosynthesis; isopentenyl diphosphate biosynthesis via DXP pathway; isopentenyl diphosphate from 1-deoxy-D-xylulose 5-phosphate: step 5/6. Converts 2C-methyl-D-erythritol 2,4-cyclodiphosphate (ME-2,4cPP) into 1-hydroxy-2-methyl-2-(E)-butenyl 4-diphosphate. The protein is 4-hydroxy-3-methylbut-2-en-1-yl diphosphate synthase (flavodoxin) of Laribacter hongkongensis (strain HLHK9).